Reading from the N-terminus, the 577-residue chain is Arginine--tRNA ligase (577 aa).

The short motif at 122–132 (PNVAKEMHVGH) is the 'HIGH' region element.

Belongs to the class-I aminoacyl-tRNA synthetase family. In terms of assembly, monomer.

The protein resides in the cytoplasm. It catalyses the reaction tRNA(Arg) + L-arginine + ATP = L-arginyl-tRNA(Arg) + AMP + diphosphate. This Histophilus somni (strain 129Pt) (Haemophilus somnus) protein is Arginine--tRNA ligase.